The chain runs to 369 residues: Peptidyl-prolyl cis-trans isomerase D (369 aa).

The region spanning 8–173 (YFDLSIGGKP…ADVRIDACGI (166 aa)) is the PPIase cyclophilin-type domain. 3 TPR repeats span residues 218–251 (VEAV…LQEY), 269–302 (VAVH…AADD), and 306–339 (AKAL…QPGD).

It belongs to the cyclophilin-type PPIase family. PPIase D subfamily.

The protein localises to the cytoplasm. It carries out the reaction [protein]-peptidylproline (omega=180) = [protein]-peptidylproline (omega=0). PPIases accelerate the folding of proteins. It catalyzes the cis-trans isomerization of proline imidic peptide bonds in oligopeptides. The chain is Peptidyl-prolyl cis-trans isomerase D (CPR6) from Eremothecium gossypii (strain ATCC 10895 / CBS 109.51 / FGSC 9923 / NRRL Y-1056) (Yeast).